The chain runs to 232 residues: MSSDELKRQAAAAALEHVRDGMKLGLGTGSTAKHFVELLGERVRGGLNVVGVPTSEVTRADALRCGIALTTLDEVDRLDLTVDGADEINAALNLIKGGGGALLREKIVAAASDRMIVIADESKLVANLGRFPLPIEVNSFGLAATLRAIEEACAECGVFGPLSLRKGSDGHAFVTDGGHWIVDAQLGRIPDAPSLADQLNAIPGVVENGLFIGLASMAVLAGPNGIRIIERP.

Substrate is bound by residues 28–31, 83–86, and 96–99; these read TGST, DGAD, and KGGG. Glu-105 functions as the Proton acceptor in the catalytic mechanism. Lys-123 is a substrate binding site.

The protein belongs to the ribose 5-phosphate isomerase family. Homodimer.

It carries out the reaction aldehydo-D-ribose 5-phosphate = D-ribulose 5-phosphate. It participates in carbohydrate degradation; pentose phosphate pathway; D-ribose 5-phosphate from D-ribulose 5-phosphate (non-oxidative stage): step 1/1. Functionally, catalyzes the reversible conversion of ribose-5-phosphate to ribulose 5-phosphate. This Rhodopseudomonas palustris (strain BisB18) protein is Ribose-5-phosphate isomerase A.